Here is a 243-residue protein sequence, read N- to C-terminus: MHNIQLVQEIERHETPLNIRPTSPYTLNPPVERDGFSWPSVGTRQRAEETEEEEKERIQRISGAIKTILTELGEDVNREGLLDTPQRYAKAMLYFTKGYQTNIMDDVIKNAVFEEDHDEMVIVRDIEIYSLCEHHLVPFFGKVHIGYIPNKKVIGLSKLARLAEMYARRLQVQERLTKQIAMALSDILKPLGVAVVMEASHMCMVSRGIQKTGSSTVTSCMLGGFRAHKTREEFLTLLGRRSI.

A Phosphothreonine modification is found at threonine 15. The tract at residues asparagine 18 to lysine 55 is disordered. Serine 23 is subject to Phosphoserine. Positions 132, 135, and 203 each coordinate Zn(2+).

This sequence belongs to the GTP cyclohydrolase I family. In terms of assembly, homodimer.

It carries out the reaction GTP + H2O = 7,8-dihydroneopterin 3'-triphosphate + formate + H(+). Its pathway is cofactor biosynthesis; 7,8-dihydroneopterin triphosphate biosynthesis; 7,8-dihydroneopterin triphosphate from GTP: step 1/1. Functionally, GTP cyclohydrolase 1 is the first enzyme in the biosynthetic pathway leading to folic acid. This is GTP cyclohydrolase 1 from Saccharomyces cerevisiae (strain ATCC 204508 / S288c) (Baker's yeast).